Here is a 311-residue protein sequence, read N- to C-terminus: Lipoyl synthase (311 aa).

[4Fe-4S] cluster contacts are provided by C36, C41, C47, C66, C70, C73, and S280. One can recognise a Radical SAM core domain in the interval 51–269; the sequence is RDGPGTATFM…RVAESEFGFL (219 aa).

Belongs to the radical SAM superfamily. Lipoyl synthase family. [4Fe-4S] cluster is required as a cofactor.

The protein localises to the cytoplasm. The enzyme catalyses [[Fe-S] cluster scaffold protein carrying a second [4Fe-4S](2+) cluster] + N(6)-octanoyl-L-lysyl-[protein] + 2 oxidized [2Fe-2S]-[ferredoxin] + 2 S-adenosyl-L-methionine + 4 H(+) = [[Fe-S] cluster scaffold protein] + N(6)-[(R)-dihydrolipoyl]-L-lysyl-[protein] + 4 Fe(3+) + 2 hydrogen sulfide + 2 5'-deoxyadenosine + 2 L-methionine + 2 reduced [2Fe-2S]-[ferredoxin]. The protein operates within protein modification; protein lipoylation via endogenous pathway; protein N(6)-(lipoyl)lysine from octanoyl-[acyl-carrier-protein]: step 2/2. Functionally, catalyzes the radical-mediated insertion of two sulfur atoms into the C-6 and C-8 positions of the octanoyl moiety bound to the lipoyl domains of lipoate-dependent enzymes, thereby converting the octanoylated domains into lipoylated derivatives. This Halobacterium salinarum (strain ATCC 29341 / DSM 671 / R1) protein is Lipoyl synthase.